Here is a 58-residue protein sequence, read N- to C-terminus: MSEIKVGENETIESALRRFKRKCARAGVLSEVRKREHYEKPSVKRKKKSEAARKRKFK.

Residues 36-58 (EHYEKPSVKRKKKSEAARKRKFK) form a disordered region. The segment covering 43–58 (VKRKKKSEAARKRKFK) has biased composition (basic residues).

Belongs to the bacterial ribosomal protein bS21 family.

The protein is Small ribosomal subunit protein bS21 of Clostridium kluyveri (strain NBRC 12016).